The sequence spans 67 residues: uncharacterized protein (67 aa).

Residues 19–39 (ISFIIFFFFYFFFFYFFYGFW) traverse the membrane as a helical segment.

Its subcellular location is the membrane. This is an uncharacterized protein from Dictyostelium discoideum (Social amoeba).